Consider the following 255-residue polypeptide: Phycoerythrobilin:ferredoxin oxidoreductase (255 aa).

It belongs to the HY2 family.

The enzyme catalyses (3Z)-phycoerythrobilin + oxidized 2[4Fe-4S]-[ferredoxin] = 15,16-dihydrobiliverdin + reduced 2[4Fe-4S]-[ferredoxin] + 2 H(+). Catalyzes the two-electron reduction of the C2 and C3(1) diene system of 15,16-dihydrobiliverdin. The sequence is that of Phycoerythrobilin:ferredoxin oxidoreductase (pebB) from Nostoc punctiforme (strain ATCC 29133 / PCC 73102).